Here is a 214-residue protein sequence, read N- to C-terminus: Membrane antigen containing repeating peptides (214 aa).

4 repeat units span residues 1-14 (QETS…EETL), 15-28 (QETS…EETL), 29-42 (QETS…EETL), and 43-56 (QETS…EETL). The interval 1–31 (QETSAKLADTEETLQETSAKLADTEETLQET) is disordered. Positions 1-56 (QETSAKLADTEETLQETSAKLADTEETLQETSAKLADTEETLQETSAKLADTEETL) are 4 X 14 AA tandem repeats. Residues 180–214 (CSLHPTPRRLGDVSNRENSIENKTRSASRLSGRLF) form a disordered region. The segment covering 188 to 203 (RLGDVSNRENSIENKT) has biased composition (basic and acidic residues).

Its subcellular location is the membrane. The chain is Membrane antigen containing repeating peptides from Leishmania major.